The following is a 335-amino-acid chain: UPF0353 protein NFA_34780 (335 aa).

A run of 2 helical transmembrane segments spans residues A8–V28 and I61–V81. The VWFA domain occupies T90–L295. The helical transmembrane segment at R310–Y330 threads the bilayer.

It belongs to the UPF0353 family.

The protein resides in the cell membrane. The sequence is that of UPF0353 protein NFA_34780 from Nocardia farcinica (strain IFM 10152).